A 259-amino-acid polypeptide reads, in one-letter code: Bisphosphoglycerate mutase (259 aa).

Ser2 carries the post-translational modification N-acetylserine. Lys3 and Lys5 each carry an N-linked (Glc) (glycation) lysine; in vitro glycan. Position 10–17 (10–17 (RHGEGAWN)) interacts with substrate. His11 functions as the Tele-phosphohistidine intermediate in the catalytic mechanism. N-linked (Glc) (glycation) lysine; in vitro glycosylation occurs at Lys18. 23–24 (CS) serves as a coordination point for substrate. Lys43 carries N-linked (Glc) (glycation) lysine; in vitro glycosylation. Substrate is bound by residues Arg62, 89–92 (ERHY), Arg100, and 116–117 (RR). Glu89 serves as the catalytic Proton donor/acceptor. Thr122 bears the Phosphothreonine mark. A glycan (N-linked (Glc) (glycation) lysine) is linked at Lys159. Residue 189-190 (GN) coordinates substrate. Lys197 is a glycosylation site (N-linked (Glc) (glycation) lysine; in vitro).

It belongs to the phosphoglycerate mutase family. BPG-dependent PGAM subfamily. As to quaternary structure, homodimer. Glycation of Lys-159 in diabetic patients inactivates the enzyme. In terms of tissue distribution, expressed in red blood cells. Expressed in non-erythroid cells of the placenta; present in the syncytiotrophoblast layer of the placental villi at the feto-maternal interface (at protein level).

The enzyme catalyses (2R)-3-phospho-glyceroyl phosphate = (2R)-2,3-bisphosphoglycerate + H(+). The catalysed reaction is (2R)-2-phosphoglycerate = (2R)-3-phosphoglycerate. With respect to regulation, at alkaline pH BPGM favors the synthase reaction; however, at lower pH the phosphatase reaction is dominant. Inhibited by citrate. Its function is as follows. Plays a major role in regulating hemoglobin oxygen affinity by controlling the levels of its allosteric effector 2,3-bisphosphoglycerate (2,3-BPG). Also exhibits mutase (EC 5.4.2.11) activity. This is Bisphosphoglycerate mutase (BPGM) from Homo sapiens (Human).